The following is a 114-amino-acid chain: Putative membrane protein insertion efficiency factor (114 aa).

This sequence belongs to the UPF0161 family.

It is found in the cell inner membrane. Functionally, could be involved in insertion of integral membrane proteins into the membrane. The polypeptide is Putative membrane protein insertion efficiency factor (Wolinella succinogenes (strain ATCC 29543 / DSM 1740 / CCUG 13145 / JCM 31913 / LMG 7466 / NCTC 11488 / FDC 602W) (Vibrio succinogenes)).